The sequence spans 239 residues: Ribonuclease 3 (239 aa).

The region spanning His11–Asp133 is the RNase III domain. Position 46 (Glu46) interacts with Mg(2+). Asp50 is an active-site residue. Positions 119 and 122 each coordinate Mg(2+). Glu122 is an active-site residue. The DRBM domain occupies Asp160–Glu230.

The protein belongs to the ribonuclease III family. Homodimer. Mg(2+) is required as a cofactor.

The protein localises to the cytoplasm. The catalysed reaction is Endonucleolytic cleavage to 5'-phosphomonoester.. Digests double-stranded RNA. Involved in the processing of primary rRNA transcript to yield the immediate precursors to the large and small rRNAs (23S and 16S). Processes some mRNAs, and tRNAs when they are encoded in the rRNA operon. Processes pre-crRNA and tracrRNA of type II CRISPR loci if present in the organism. The sequence is that of Ribonuclease 3 from Neisseria gonorrhoeae (strain NCCP11945).